The following is a 1038-amino-acid chain: Elongation factor 3 (1038 aa).

HEAT repeat units follow at residues 93-131 (EAYL…SANK), 133-170 (STIR…VAPY), 174-211 (RCLP…VVGN), 213-249 (DIEP…TVEA), 255-287 (MEPL…LMDD), and 292-331 (QLFI…AGGS). E406 contacts ADP. ABC transporter domains are found at residues 426 to 654 (IFIE…YYEL) and 680 to 995 (IRLT…EEVT). The ADP site is built by N716, E924, N927, and H953. A disordered region spans residues 1012 to 1038 (RKEKKAKDKARKEAEARGEYYSDSDEE). The span at 1021–1031 (ARKEAEARGEY) shows a compositional bias: basic and acidic residues.

It belongs to the ABC transporter superfamily. ABCF family. EF3 subfamily. In terms of assembly, monomer.

It is found in the cytoplasm. It catalyses the reaction ATP + H2O = ADP + phosphate + H(+). The protein operates within protein biosynthesis; polypeptide chain elongation. In terms of biological role, ribosome-dependent ATPase that functions in cytoplasmic translation elongation. Required for the ATP-dependent release of deacylated tRNA from the ribosomal E-site during protein biosynthesis. Stimulates the eEF1A-dependent binding of aminoacyl-tRNA to the ribosomal A-site, which has reduced affinity for tRNA as long as the E-site is occupied. Assists translation termination by stimulating the release of nascent protein from the ribosome by release factors. This Phytophthora infestans (strain T30-4) (Potato late blight agent) protein is Elongation factor 3.